The following is a 230-amino-acid chain: Glutathione S-transferase 2 (230 aa).

The GST N-terminal domain maps to 2 to 86; the sequence is AHFTLYSHAG…YLADKYDTDR (85 aa). Residues 93-230 form the GST C-terminal domain; that stretch reads DDPEYYKLIQ…EELAKAKEQH (138 aa).

It belongs to the GST superfamily.

The enzyme catalyses RX + glutathione = an S-substituted glutathione + a halide anion + H(+). Involved in the oxidative stress response and detoxification. This is Glutathione S-transferase 2 (gst2) from Schizosaccharomyces pombe (strain 972 / ATCC 24843) (Fission yeast).